A 275-amino-acid chain; its full sequence is MSNSRQHQGHFARKRFGQNFLVDHGVIDAIVAAIRPERGERMVEIGPGLGALTGPVIARLATPDSPLHAVELDRDLIGRLKQRFGELLELHEGDALAFDFGSLALPGEKPSLRIIGNLPYNISSPLLFHLMSFAPVVIDQHFMLQNEVVERMVAEPGTKAFSRLSVMLQYRYVMDKLIDVPPESFQPPPKVDSAIVRMIPHAPHELPAVDPAVLGEVVTAAFSQRRKMLRNTLGGYRDLVDFDALGFDLARRAEDVGVDEYVRVAQAACAARAGR.

Residues asparagine 19, leucine 21, glycine 46, glutamate 71, aspartate 94, and asparagine 117 each contribute to the S-adenosyl-L-methionine site.

It belongs to the class I-like SAM-binding methyltransferase superfamily. rRNA adenine N(6)-methyltransferase family. RsmA subfamily.

Its subcellular location is the cytoplasm. It catalyses the reaction adenosine(1518)/adenosine(1519) in 16S rRNA + 4 S-adenosyl-L-methionine = N(6)-dimethyladenosine(1518)/N(6)-dimethyladenosine(1519) in 16S rRNA + 4 S-adenosyl-L-homocysteine + 4 H(+). In terms of biological role, specifically dimethylates two adjacent adenosines (A1518 and A1519) in the loop of a conserved hairpin near the 3'-end of 16S rRNA in the 30S particle. May play a critical role in biogenesis of 30S subunits. In Burkholderia thailandensis (strain ATCC 700388 / DSM 13276 / CCUG 48851 / CIP 106301 / E264), this protein is Ribosomal RNA small subunit methyltransferase A.